The primary structure comprises 131 residues: Thrombocorticin (131 aa).

Cysteine 3 and cysteine 111 are joined by a disulfide. The segment at 28–60 (RNESVEVKDSNGNTVSRGSGSSSSGGTFTVINM) is disordered. Over residues 37–54 (SNGNTVSRGSGSSSSGGT) the composition is skewed to low complexity. Positions 117 to 131 (DFNDVFVLITGLVRG) match the Pseudodomain-swapping motif motif.

Binds to fucose and mannose in a calcium-dependent manner (in vitro). Acts as an agonist for human thrombopoietin receptor MPL (in vitro). Binding of sugar-moieties may promote the interaction with human MPL on the cell surface (in vitro). Catalyzes MPL dimerization and activation, and modulates internalization of the receptor (in vitro). Exhibits proliferation activity in murine recombinant Ba/F3 cells expressing human MPL (Ba/F3-huMPL) (in vitro). Induces phosphorylation of STAT5 in recombinant Ba/F3-huMPL cells, possibly by stimulating MPL on the cell surface to transduce signals via Jak/STAT signaling pathway (in vitro). Does not aggregate rabbit erythrocytes, indicating absent lectin-like agglutination activity (in vitro). This is Thrombocorticin from Corticium sp. (Marine sponge).